Reading from the N-terminus, the 221-residue chain is Orotidine 5'-phosphate decarboxylase (221 aa).

Substrate contacts are provided by residues aspartate 12, lysine 34, 60–69 (DFKVADIPNT), serine 117, 170–180 (PGVGAQGGKAS), glycine 193, and arginine 194. The active-site Proton donor is lysine 62.

It belongs to the OMP decarboxylase family. Type 1 subfamily. Homodimer.

It catalyses the reaction orotidine 5'-phosphate + H(+) = UMP + CO2. It functions in the pathway pyrimidine metabolism; UMP biosynthesis via de novo pathway; UMP from orotate: step 2/2. Its function is as follows. Catalyzes the decarboxylation of orotidine 5'-monophosphate (OMP) to uridine 5'-monophosphate (UMP). The sequence is that of Orotidine 5'-phosphate decarboxylase from Methanosarcina barkeri (strain Fusaro / DSM 804).